The chain runs to 123 residues: Small ribosomal subunit protein bS6 (123 aa).

The tract at residues 102 to 123 (MLKQKEERAPRREAEAKEFAAE) is disordered. The span at 104-123 (KQKEERAPRREAEAKEFAAE) shows a compositional bias: basic and acidic residues.

The protein belongs to the bacterial ribosomal protein bS6 family.

Functionally, binds together with bS18 to 16S ribosomal RNA. The chain is Small ribosomal subunit protein bS6 from Vibrio vulnificus (strain CMCP6).